The sequence spans 167 residues: Photosystem I assembly protein Ycf3 (167 aa).

TPR repeat units follow at residues 35 to 68 (AFSY…EEDP), 72 to 105 (SFIL…NNKL), and 120 to 153 (AVKA…APSN).

Belongs to the Ycf3 family.

It localises to the plastid. Its subcellular location is the chloroplast thylakoid membrane. In terms of biological role, essential for the assembly of the photosystem I (PSI) complex. May act as a chaperone-like factor to guide the assembly of the PSI subunits. The chain is Photosystem I assembly protein Ycf3 from Galdieria sulphuraria (Red alga).